Here is a 207-residue protein sequence, read N- to C-terminus: Fibroblast growth factor 18 (207 aa).

An N-terminal signal peptide occupies residues Met-1–Ala-27. Asn-39 carries an N-linked (GlcNAc...) asparagine glycan. Cys-109 and Cys-127 are oxidised to a cystine. Asn-137 carries N-linked (GlcNAc...) asparagine glycosylation. The interval Gly-157 to Thr-183 is disordered. Residues Lys-164–Phe-174 show a composition bias toward basic and acidic residues.

The protein belongs to the heparin-binding growth factors family. Interacts with FGFR3 and FGFR4. In terms of tissue distribution, mainly expressed in the lung. Not detected in brain, heart, liver, kidney and small intestine.

Its subcellular location is the secreted. Functionally, plays an important role in the regulation of cell proliferation, cell differentiation and cell migration. Required for normal ossification and bone development. Stimulates hepatic and intestinal proliferation. This chain is Fibroblast growth factor 18 (Fgf18), found in Rattus norvegicus (Rat).